The primary structure comprises 110 residues: Phosphoribosyl-ATP pyrophosphatase (110 aa).

Belongs to the PRA-PH family.

It is found in the cytoplasm. It catalyses the reaction 1-(5-phospho-beta-D-ribosyl)-ATP + H2O = 1-(5-phospho-beta-D-ribosyl)-5'-AMP + diphosphate + H(+). Its pathway is amino-acid biosynthesis; L-histidine biosynthesis; L-histidine from 5-phospho-alpha-D-ribose 1-diphosphate: step 2/9. In Hahella chejuensis (strain KCTC 2396), this protein is Phosphoribosyl-ATP pyrophosphatase.